The sequence spans 194 residues: Ribosome maturation factor RimP (194 aa).

It belongs to the RimP family.

The protein resides in the cytoplasm. Required for maturation of 30S ribosomal subunits. This chain is Ribosome maturation factor RimP, found in Jannaschia sp. (strain CCS1).